Here is a 341-residue protein sequence, read N- to C-terminus: Methionine import ATP-binding protein MetN 1 (341 aa).

Residues 2 to 241 (IKLNQIVKRY…PQHEVTKRFV (240 aa)) form the ABC transporter domain. Position 38-45 (38-45 (GFSGAGKS)) interacts with ATP.

This sequence belongs to the ABC transporter superfamily. Methionine importer (TC 3.A.1.24) family. The complex is composed of two ATP-binding proteins (MetN), two transmembrane proteins (MetI) and a solute-binding protein (MetQ).

The protein resides in the cell membrane. The enzyme catalyses L-methionine(out) + ATP + H2O = L-methionine(in) + ADP + phosphate + H(+). The catalysed reaction is D-methionine(out) + ATP + H2O = D-methionine(in) + ADP + phosphate + H(+). Part of the ABC transporter complex MetNIQ involved in methionine import. Responsible for energy coupling to the transport system. This Staphylococcus epidermidis (strain ATCC 12228 / FDA PCI 1200) protein is Methionine import ATP-binding protein MetN 1.